A 194-amino-acid chain; its full sequence is WASH complex subunit 3 (194 aa).

Met-1 is modified (N-acetylmethionine). Residues 46-74 (TVCEEKLADLSLRIQQIETTLNILDAKLS) adopt a coiled-coil conformation. Residues 98 to 123 (THSEATSEQSQQNSLQDSGPQESEVT) are compositionally biased toward polar residues. Disordered regions lie at residues 98-125 (THSEATSEQSQQNSLQDSGPQESEVTPE) and 158-194 (SEGLDPDLLERPDAPVPDGEGEKNTEESSDSESSFSD).

Belongs to the CCDC53 family. In terms of assembly, component of the WASH core complex also described as WASH regulatory complex (SHRC) composed of WASHC1, WASHC2, WASHC3, WASHC4 and WASHC5. The WASH core complex associates via WASHC2 with the F-actin-capping protein dimer (formed by CAPZA1, CAPZA2 or CAPZA3 and CAPZB) in a transient or substoichiometric manner which was initially described as WASH complex.

The protein resides in the early endosome. Its function is as follows. Acts as a component of the WASH core complex that functions as a nucleation-promoting factor (NPF) at the surface of endosomes, where it recruits and activates the Arp2/3 complex to induce actin polymerization, playing a key role in the fission of tubules that serve as transport intermediates during endosome sorting. The chain is WASH complex subunit 3 from Bos taurus (Bovine).